A 367-amino-acid chain; its full sequence is Serine/threonine-protein kinase Sgk2 (367 aa).

The disordered stretch occupies residues 1–28 (MASSPVGVPSPQPSRANGNINLGPSANP). A Phosphoserine modification is found at Ser10. Polar residues predominate over residues 15–28 (RANGNINLGPSANP). Residues 35–292 (FDFLKVIGKG…FLDIKNHMFF (258 aa)) enclose the Protein kinase domain. Residues 41–49 (IGKGNYGKV) and Lys64 each bind ATP. Residues 68–77 (KKSILKNKEQ) carry the Nuclear localization signal motif. Residue Asp159 is the Proton acceptor of the active site. A Phosphothreonine; by PDPK1 modification is found at Thr193. Positions 293–367 (SPINWDDLYH…AQDDDDILDS (75 aa)) constitute an AGC-kinase C-terminal domain. Residues Ser334 and Ser356 each carry the phosphoserine modification. Tyr357 carries the phosphotyrosine modification.

Belongs to the protein kinase superfamily. AGC Ser/Thr protein kinase family. Post-translationally, activated by phosphorylation on Ser-356 by an unknown kinase (may be mTORC2 but not confirmed), transforming it into a substrate for PDPK1 which then phosphorylates it on Thr-193. In terms of tissue distribution, expressed in the proximal tubule and thick ascending limb of the loop of Henle (TALH).

The protein localises to the cytoplasm. It localises to the nucleus. The catalysed reaction is L-seryl-[protein] + ATP = O-phospho-L-seryl-[protein] + ADP + H(+). The enzyme catalyses L-threonyl-[protein] + ATP = O-phospho-L-threonyl-[protein] + ADP + H(+). With respect to regulation, two specific sites, one in the kinase domain (Thr-193) and the other in the C-terminal regulatory region (Ser-356), need to be phosphorylated for its full activation. In terms of biological role, serine/threonine-protein kinase which is involved in the regulation of a wide variety of ion channels, membrane transporters, cell growth, survival and proliferation. Up-regulates Na(+) channels: SCNN1A/ENAC, K(+) channels: KCNA3/Kv1.3, KCNE1 and KCNQ1, amino acid transporter: SLC6A19, glutamate transporter: SLC1A6/EAAT4, glutamate receptors: GRIA1/GLUR1 and GRIK2/GLUR6, Na(+)/H(+) exchanger: SLC9A3/NHE3, and the Na(+)/K(+) ATPase. The protein is Serine/threonine-protein kinase Sgk2 (Sgk2) of Rattus norvegicus (Rat).